A 510-amino-acid chain; its full sequence is F-box only protein 15 (510 aa).

The F-box domain maps to M77 to I117.

Directly interacts with SKP1 and CUL1.

Functionally, substrate-recognition component of the SCF (SKP1-CUL1-F-box protein)-type E3 ubiquitin ligase complex. The chain is F-box only protein 15 (FBXO15) from Homo sapiens (Human).